The following is a 592-amino-acid chain: Protein alan shepard (592 aa).

Residues 1-68 (MGGPHHQHQQ…ASVAAAPPTP (68 aa)) are disordered. The span at 18 to 28 (VGGGNGHGGGA) shows a compositional bias: gly residues. Residues 36-54 (PNSQQLPPQMPRSQNYANG) show a composition bias toward polar residues. Over residues 55–64 (SSSAASVAAA) the composition is skewed to low complexity. 2 positions are modified to phosphotyrosine: Tyr124 and Tyr140. The disordered stretch occupies residues 162-224 (PATTTYGQRV…AQNQNQQGGE (63 aa)). Residues 176 to 224 (SPSNTNSSSSSNTGSQSGTLSTSLSNTTNTNTTMGPNGTAQNQNQQGGE) show a composition bias toward low complexity. 2 consecutive RRM domains span residues 229–307 (TNLY…IWVL) and 319–398 (TNLY…FADG). A disordered region spans residues 565–592 (PMTDSEQASTAASPDEAYTQYPHQAAPK).

Functionally, has a role in the perception of gravity. This is Protein alan shepard from Drosophila mojavensis (Fruit fly).